Reading from the N-terminus, the 164-residue chain is 16S rRNA aminocarboxypropyltransferase (164 aa).

Residues T18, I66, L87, and S106 each coordinate S-adenosyl-L-methionine.

Belongs to the TDD superfamily. TSR3 family.

It localises to the cytoplasm. The enzyme catalyses an N(1)-methylpseudouridine in rRNA + S-adenosyl-L-methionine = N(1)-methyl-N(3)-[(3S)-3-amino-3-carboxypropyl]pseudouridine in rRNA + S-methyl-5'-thioadenosine + H(+). Its function is as follows. Aminocarboxypropyltransferase that catalyzes the aminocarboxypropyl transfer on pseudouridine corresponding to position 914 in M.jannaschii 16S rRNA. It constitutes the last step in biosynthesis of the hypermodified N1-methyl-N3-(3-amino-3-carboxypropyl) pseudouridine (m1acp3-Psi). The chain is 16S rRNA aminocarboxypropyltransferase from Thermoplasma volcanium (strain ATCC 51530 / DSM 4299 / JCM 9571 / NBRC 15438 / GSS1).